A 333-amino-acid polypeptide reads, in one-letter code: Ornithine carbamoyltransferase (333 aa).

Residues 56 to 59 (STRT), glutamine 83, arginine 107, and 134 to 137 (HPTQ) contribute to the carbamoyl phosphate site. Residues asparagine 167, aspartate 231, and 235–236 (SM) each bind L-ornithine. Residues 273-274 (CL) and arginine 318 contribute to the carbamoyl phosphate site.

Belongs to the aspartate/ornithine carbamoyltransferase superfamily. OTCase family.

The protein localises to the cytoplasm. The catalysed reaction is carbamoyl phosphate + L-ornithine = L-citrulline + phosphate + H(+). Its pathway is amino-acid biosynthesis; L-arginine biosynthesis; L-arginine from L-ornithine and carbamoyl phosphate: step 1/3. Functionally, reversibly catalyzes the transfer of the carbamoyl group from carbamoyl phosphate (CP) to the N(epsilon) atom of ornithine (ORN) to produce L-citrulline. The chain is Ornithine carbamoyltransferase from Staphylococcus aureus (strain MSSA476).